Here is a 607-residue protein sequence, read N- to C-terminus: MEVPTARLLLLLLLGAWAPAPESASPEAPLLVNEDVKRTVDLSSHLAKVTAEVVLAHPGGGSTARAASFLLALEPELEARLAHLGVQVKGEDEEENNLEVRETKIKGKSGRFFTVKLPVALDPGAKVSVVVETVYTHVLQPYPTQITQSEKQFVVFEGNHYFYSPYPTKTQTMRVKLASRNVESYTKLGNPTRSEDLLDYGPFRDIPAYSQDTFKVHYENNSPFLTITSMTRVIEVSHWGNIAVEENVDLKHTGAVLKGPFSRYDYQRQPDSGIASIRSFKTILPAAAQDVYYRDEIGNVSTSHLLILDDSVEMEIRPRFPLFGGWKTHYIVGYNLPSYEYLYNLGDQYALKMRFVDHVFDEQVIDSLTVKIILPEGAKNIQVDSPYEISRAPDELHYTYLDTFGRPVIVAYKKNLVEQHIQDIVVHYTFNKVLMLQEPLLVVAAFYILFFTVIIYVRLDFSITKDPAAEARMKVACITEQVLTLVNKRIGLYRHFDETINRYKQSRDVSTLNSGKKSLETEHKALTSEIASLQSRLKTEGSDLCDKVSEMQKLDAQVKELVLKSAVEAERLVAGKLKKDTYIENEKLISGKRQELVTKIDHILDAL.

An N-terminal signal peptide occupies residues 1 to 24 (MEVPTARLLLLLLLGAWAPAPESA). Residues 25 to 434 (SPEAPLLVNE…VVHYTFNKVL (410 aa)) lie on the Lumenal side of the membrane. Position 187 is an N6-acetyllysine (Lys-187). The N-linked (GlcNAc...) asparagine glycan is linked to Asn-299. The helical transmembrane segment at 435–455 (MLQEPLLVVAAFYILFFTVII) threads the bilayer. Residues 456 to 607 (YVRLDFSITK…TKIDHILDAL (152 aa)) lie on the Cytoplasmic side of the membrane. Lys-538 is subject to N6-acetyllysine; alternate. Residue Lys-538 forms a Glycyl lysine isopeptide (Lys-Gly) (interchain with G-Cter in SUMO2); alternate linkage.

It belongs to the OST1 family. Component of the oligosaccharyltransferase (OST) complex. OST exists in two different complex forms which contain common core subunits RPN1, RPN2, OST48, OST4, DAD1 and TMEM258, either STT3A or STT3B as catalytic subunits, and form-specific accessory subunits. STT3A complex assembly occurs through the formation of 3 subcomplexes. Subcomplex 1 contains RPN1 and TMEM258, subcomplex 2 contains the STT3A-specific subunits STT3A, DC2/OSTC, and KCP2 as well as the core subunit OST4, and subcomplex 3 contains RPN2, DAD1, and OST48. The STT3A complex can form stable complexes with the Sec61 complex or with both the Sec61 and TRAP complexes. Interacts with TMEM35A/NACHO. Post-translationally, ubiquitinated by the ECS(ASB11) complex. In terms of processing, ufmylated by UFL1 in response to endoplasmic reticulum stress, promoting reticulophagy of endoplasmic reticulum sheets.

It localises to the endoplasmic reticulum membrane. Its pathway is protein modification; protein glycosylation. Subunit of the oligosaccharyl transferase (OST) complex that catalyzes the initial transfer of a defined glycan (Glc(3)Man(9)GlcNAc(2) in eukaryotes) from the lipid carrier dolichol-pyrophosphate to an asparagine residue within an Asn-X-Ser/Thr consensus motif in nascent polypeptide chains, the first step in protein N-glycosylation. N-glycosylation occurs cotranslationally and the complex associates with the Sec61 complex at the channel-forming translocon complex that mediates protein translocation across the endoplasmic reticulum (ER). All subunits are required for a maximal enzyme activity. The polypeptide is Dolichyl-diphosphooligosaccharide--protein glycosyltransferase subunit 1 (Canis lupus familiaris (Dog)).